Reading from the N-terminus, the 264-residue chain is Electron transfer flavoprotein subunit beta (264 aa).

AMP is bound by residues Ala-6, 36–39, Val-64, 119–122, and 127–130; these read NEWD, GVQS, and YAST.

Heterodimer of an alpha and a beta subunit. Forms a ternary complex with trimethylamine dehydrogenase.

Its function is as follows. Heterodimeric electron transfer flavoprotein that accepts electrons from trimethylamine dehydrogenase. It transfers the electrons to the main respiratory chain via ETF-ubiquinone oxidoreductase (ETF dehydrogenase). EtfB binds an AMP molecule that probably has a purely structural role. In Methylophilus methylotrophus (Bacterium W3A1), this protein is Electron transfer flavoprotein subunit beta (etfB).